A 439-amino-acid chain; its full sequence is 26S proteasome regulatory subunit 4 (439 aa).

2 disordered regions span residues 1 to 48 (MGQN…AMKL) and 82 to 104 (ERLKPQDEKNEEERSKVDDLRGT). 2 stretches are compositionally biased toward basic and acidic residues: residues 12–25 (GEKKDDKDKKKKYE) and 82–102 (ERLKPQDEKNEEERSKVDDLR). ATP is bound at residue 225–232 (GPPGTGKT).

Belongs to the AAA ATPase family. As to quaternary structure, interacts with PSMD5.

The protein localises to the cytoplasm. It is found in the nucleus. Functionally, the 26S proteasome is involved in the ATP-dependent degradation of ubiquitinated proteins. The regulatory (or ATPase) complex confers ATP dependency and substrate specificity to the 26S complex. The polypeptide is 26S proteasome regulatory subunit 4 (Rpt2) (Drosophila melanogaster (Fruit fly)).